The chain runs to 470 residues: Argininosuccinate lyase (470 aa).

It belongs to the lyase 1 family. Argininosuccinate lyase subfamily.

It is found in the cytoplasm. It carries out the reaction 2-(N(omega)-L-arginino)succinate = fumarate + L-arginine. Its pathway is amino-acid biosynthesis; L-arginine biosynthesis; L-arginine from L-ornithine and carbamoyl phosphate: step 3/3. In Mycolicibacterium gilvum (strain PYR-GCK) (Mycobacterium gilvum (strain PYR-GCK)), this protein is Argininosuccinate lyase.